A 156-amino-acid chain; its full sequence is Small ribosomal subunit protein uS7 (156 aa).

It belongs to the universal ribosomal protein uS7 family. Part of the 30S ribosomal subunit. Contacts proteins S9 and S11.

Functionally, one of the primary rRNA binding proteins, it binds directly to 16S rRNA where it nucleates assembly of the head domain of the 30S subunit. Is located at the subunit interface close to the decoding center, probably blocks exit of the E-site tRNA. The chain is Small ribosomal subunit protein uS7 from Ligilactobacillus salivarius (strain UCC118) (Lactobacillus salivarius).